Reading from the N-terminus, the 170-residue chain is Myosin regulatory light chain 2, skeletal muscle isoform type 1 (170 aa).

The residue at position 2 (Ala-2) is a N,N,N-trimethylalanine. Phosphoserine is present on residues Ser-16 and Ser-17. A phosphothreonine mark is found at Thr-26 and Thr-36. The 36-residue stretch at 26-61 (TQIQEFKEAFTVIDQNRDGIIDKEDLRDTFAAMGRL) folds into the EF-hand 1 domain. Asp-39, Asn-41, Asp-43, and Asp-50 together coordinate Ca(2+). Residue Ser-76 is modified to Phosphoserine. EF-hand domains follow at residues 96–131 (DPED…QCDR) and 132–167 (FSQE…GDAK). At Thr-102 the chain carries Phosphothreonine.

As to quaternary structure, myosin is a hexamer of 2 heavy chains and 4 light chains.

This is Myosin regulatory light chain 2, skeletal muscle isoform type 1 from Oryctolagus cuniculus (Rabbit).